A 379-amino-acid polypeptide reads, in one-letter code: Arginine biosynthesis bifunctional protein ArgJ (379 aa).

Substrate-binding residues include Thr-140, Lys-160, Thr-171, Glu-249, Asn-374, and Thr-379. Catalysis depends on Thr-171, which acts as the Nucleophile.

This sequence belongs to the ArgJ family. As to quaternary structure, heterotetramer of two alpha and two beta chains.

It is found in the cytoplasm. It catalyses the reaction N(2)-acetyl-L-ornithine + L-glutamate = N-acetyl-L-glutamate + L-ornithine. The enzyme catalyses L-glutamate + acetyl-CoA = N-acetyl-L-glutamate + CoA + H(+). It participates in amino-acid biosynthesis; L-arginine biosynthesis; L-ornithine and N-acetyl-L-glutamate from L-glutamate and N(2)-acetyl-L-ornithine (cyclic): step 1/1. Its pathway is amino-acid biosynthesis; L-arginine biosynthesis; N(2)-acetyl-L-ornithine from L-glutamate: step 1/4. Functionally, catalyzes two activities which are involved in the cyclic version of arginine biosynthesis: the synthesis of N-acetylglutamate from glutamate and acetyl-CoA as the acetyl donor, and of ornithine by transacetylation between N(2)-acetylornithine and glutamate. In Archaeoglobus fulgidus (strain ATCC 49558 / DSM 4304 / JCM 9628 / NBRC 100126 / VC-16), this protein is Arginine biosynthesis bifunctional protein ArgJ.